We begin with the raw amino-acid sequence, 1364 residues long: DNA-directed RNA polymerase subunit beta (1364 aa).

This sequence belongs to the RNA polymerase beta chain family. As to quaternary structure, the RNAP catalytic core consists of 2 alpha, 1 beta, 1 beta' and 1 omega subunit. When a sigma factor is associated with the core the holoenzyme is formed, which can initiate transcription.

It catalyses the reaction RNA(n) + a ribonucleoside 5'-triphosphate = RNA(n+1) + diphosphate. Its function is as follows. DNA-dependent RNA polymerase catalyzes the transcription of DNA into RNA using the four ribonucleoside triphosphates as substrates. The polypeptide is DNA-directed RNA polymerase subunit beta (Desulfatibacillum aliphaticivorans).